An 80-amino-acid chain; its full sequence is Probable Rubredoxin-1 (80 aa).

A Rubredoxin-like domain is found at 19–72 (YRKYKCKVCGWVYDPLKGDPSQNIPPKTPFEELPDTWICPVCRGKVGKESFEPL). Fe cation contacts are provided by Cys-24, Cys-27, Cys-57, and Cys-60.

It belongs to the rubredoxin family. Requires Fe(3+) as cofactor.

Rubredoxin is a small nonheme, iron protein lacking acid-labile sulfide. Its single Fe, chelated to 4 Cys, functions as an electron acceptor and may also stabilize the conformation of the molecule. The sequence is that of Probable Rubredoxin-1 from Methanocaldococcus jannaschii (strain ATCC 43067 / DSM 2661 / JAL-1 / JCM 10045 / NBRC 100440) (Methanococcus jannaschii).